The chain runs to 237 residues: Zinc finger protein 22 (237 aa).

Residues 1–33 are disordered; that stretch reads MRLGKPKGGISRSASQGKTYESKRKTARQRQKW. N6-acetyllysine is present on residues K18 and K23. C2H2-type zinc fingers lie at residues 55–82, 83–110, 111–138, 139–166, and 167–194; these read YKCTKCSKSFSQSSTLFQHKKIHTGKKS, HKCADCGKSFFQSSNLIQHRRIHTGEKP, YKCDECGERFKQSSNLIQHQRIHTGEKP, YCCDECGRCFSQSSHLIQHQRTHTGEKP, and YQCEECDKCFSQSSHLRQHMKVHKEKKS. The segment covering 188–217 has biased composition (basic residues); the sequence is VHKEKKSHKRGKNARAKTHPVSWKRGKGRK. Residues 188–218 form a disordered region; it reads VHKEKKSHKRGKNARAKTHPVSWKRGKGRKA.

This sequence belongs to the krueppel C2H2-type zinc-finger protein family. Highly expressed in the ameloblast layer of mandibular incisors, moderately expressed in submandibular gland, calvaria, kidney and lung, and expressed at low levels in brain and thymus.

It localises to the nucleus. Binds DNA through the consensus sequence 5'-CAATG-3'. May be involved in transcriptional regulation and may play a role in tooth formation. This Rattus norvegicus (Rat) protein is Zinc finger protein 22 (Znf22).